The following is a 144-amino-acid chain: Tryparedoxin (144 aa).

The region spanning 2–144 (SGLAKYLPGA…PDGANFPWPN (143 aa)) is the Thioredoxin domain. Cys40 and Cys43 are joined by a disulfide.

Belongs to the thioredoxin family.

In terms of biological role, acts as a thiol-disulfide oxidoreductase. It is spontaneously reduced by trypanothione. This Trypanosoma brucei brucei protein is Tryparedoxin.